The primary structure comprises 273 residues: Dermonecrotic toxin LapSicTox-alphaII1 (273 aa).

The active site involves His-5. Mg(2+)-binding residues include Glu-25 and Asp-27. His-41 serves as the catalytic Nucleophile. 2 disulfide bridges follow: Cys-45-Cys-51 and Cys-47-Cys-191. Asp-85 serves as a coordination point for Mg(2+).

This sequence belongs to the arthropod phospholipase D family. Class II subfamily. Mg(2+) is required as a cofactor. As to expression, expressed by the venom gland.

It is found in the secreted. It catalyses the reaction an N-(acyl)-sphingosylphosphocholine = an N-(acyl)-sphingosyl-1,3-cyclic phosphate + choline. The enzyme catalyses an N-(acyl)-sphingosylphosphoethanolamine = an N-(acyl)-sphingosyl-1,3-cyclic phosphate + ethanolamine. It carries out the reaction a 1-acyl-sn-glycero-3-phosphocholine = a 1-acyl-sn-glycero-2,3-cyclic phosphate + choline. The catalysed reaction is a 1-acyl-sn-glycero-3-phosphoethanolamine = a 1-acyl-sn-glycero-2,3-cyclic phosphate + ethanolamine. Its function is as follows. Dermonecrotic toxins cleave the phosphodiester linkage between the phosphate and headgroup of certain phospholipids (sphingolipid and lysolipid substrates), forming an alcohol (often choline) and a cyclic phosphate. This toxin acts on sphingomyelin (SM). It may also act on ceramide phosphoethanolamine (CPE), lysophosphatidylcholine (LPC) and lysophosphatidylethanolamine (LPE), but not on lysophosphatidylserine (LPS), and lysophosphatidylglycerol (LPG). It acts by transphosphatidylation, releasing exclusively cyclic phosphate products as second products. Induces dermonecrosis, hemolysis, increased vascular permeability, edema, inflammatory response, and platelet aggregation. This is Dermonecrotic toxin LapSicTox-alphaII1 from Loxosceles apachea (Apache recluse spider).